The primary structure comprises 183 residues: Large ribosomal subunit protein uL5 (183 aa).

It belongs to the universal ribosomal protein uL5 family. As to quaternary structure, part of the 50S ribosomal subunit; part of the 5S rRNA/L5/L18/L25 subcomplex. Contacts the 5S rRNA and the P site tRNA. Forms a bridge to the 30S subunit in the 70S ribosome.

Functionally, this is one of the proteins that bind and probably mediate the attachment of the 5S RNA into the large ribosomal subunit, where it forms part of the central protuberance. In the 70S ribosome it contacts protein S13 of the 30S subunit (bridge B1b), connecting the 2 subunits; this bridge is implicated in subunit movement. Contacts the P site tRNA; the 5S rRNA and some of its associated proteins might help stabilize positioning of ribosome-bound tRNAs. This is Large ribosomal subunit protein uL5 from Flavobacterium johnsoniae (strain ATCC 17061 / DSM 2064 / JCM 8514 / BCRC 14874 / CCUG 350202 / NBRC 14942 / NCIMB 11054 / UW101) (Cytophaga johnsonae).